The chain runs to 94 residues: Enhancer of yellow 2 transcription factor (94 aa).

The protein belongs to the ENY2 family. Component of the nuclear pore complex (NPC)-associated AMEX complex (anchoring and mRNA export complex), composed of at least e(y)2 and xmas-2. Component of the SAGA transcription coactivator-HAT complexes, at least composed of Ada2b, e(y)2, Pcaf/Gcn5, Taf10 and Nipped-A/Trrap. Within the SAGA complex, e(y)2, Sgf11, and not/nonstop form an additional subcomplex of SAGA called the DUB module (deubiquitination module). Component of the THO complex, composed of at least e(y)2, HPR1, THO2, THOC5, THOC6 and THOC7. Interacts with e(y)1. Interacts with su(Hw) (via zinc fingers). Interacts with xmas-2; required for localization to the nuclear periphery. Interacts with the nuclear pore complex (NPC).

Its subcellular location is the nucleus. The protein localises to the nucleoplasm. The protein resides in the cytoplasm. Involved in mRNA export coupled transcription activation by association with both the AMEX and the SAGA complexes. The SAGA complex is a multiprotein complex that activates transcription by remodeling chromatin and mediating histone acetylation and deubiquitination. Within the SAGA complex, participates in a subcomplex that specifically deubiquitinates histone H2B. The SAGA complex is recruited to specific gene promoters by activators, where it is required for transcription. Required for nuclear receptor-mediated transactivation. Involved in transcription elongation by recruiting the THO complex onto nascent mRNA. The AMEX complex functions in docking export-competent ribonucleoprotein particles (mRNPs) to the nuclear entrance of the nuclear pore complex (nuclear basket). AMEX participates in mRNA export and accurate chromatin positioning in the nucleus by tethering genes to the nuclear periphery. The polypeptide is Enhancer of yellow 2 transcription factor (Drosophila grimshawi (Hawaiian fruit fly)).